The following is a 146-amino-acid chain: Snaclec 4 (146 aa).

Positions 1-23 are cleaved as a signal peptide; the sequence is MGRFISISFGLLVVFLSLSGTEA. Intrachain disulfides connect C27/C38, C55/C144, and C121/C136. Residues 34–145 form the C-type lectin domain; it reads YDQNCYKVFT…CNFIAPVVCK (112 aa).

The protein belongs to the snaclec family. In terms of assembly, heterodimer; disulfide-linked.

The protein resides in the secreted. Interferes with one step of hemostasis (modulation of platelet aggregation, or coagulation cascade, for example). The polypeptide is Snaclec 4 (Daboia siamensis (Eastern Russel's viper)).